Reading from the N-terminus, the 158-residue chain is Probable host range protein 2-1 (158 aa).

Belongs to the poxviridae C7 protein family.

Plays a role for multiplication of the virus in different cell types. The protein is Probable host range protein 2-1 of Rabbit fibroma virus (strain Kasza) (RFV).